The sequence spans 460 residues: Argininosuccinate lyase (460 aa).

The protein belongs to the lyase 1 family. Argininosuccinate lyase subfamily.

The protein localises to the cytoplasm. The enzyme catalyses 2-(N(omega)-L-arginino)succinate = fumarate + L-arginine. It participates in amino-acid biosynthesis; L-arginine biosynthesis; L-arginine from L-ornithine and carbamoyl phosphate: step 3/3. The polypeptide is Argininosuccinate lyase (Lacticaseibacillus paracasei (strain ATCC 334 / BCRC 17002 / CCUG 31169 / CIP 107868 / KCTC 3260 / NRRL B-441) (Lactobacillus paracasei)).